The following is a 316-amino-acid chain: Protoheme IX farnesyltransferase (316 aa).

The next 9 helical transmembrane spans lie at 28 to 48, 50 to 70, 99 to 119, 122 to 142, 150 to 170, 178 to 198, 223 to 243, 244 to 264, and 293 to 313; these read IIPL…KGQV, PLLL…AQTL, HALI…VFFV, LSGF…THLL, IVIG…AVTG, ILFA…ALMI, IWLY…PLAA, CGVV…KKAW, and AMVI…ASLF.

Belongs to the UbiA prenyltransferase family. Protoheme IX farnesyltransferase subfamily.

The protein localises to the cell inner membrane. It carries out the reaction heme b + (2E,6E)-farnesyl diphosphate + H2O = Fe(II)-heme o + diphosphate. It functions in the pathway porphyrin-containing compound metabolism; heme O biosynthesis; heme O from protoheme: step 1/1. Converts heme B (protoheme IX) to heme O by substitution of the vinyl group on carbon 2 of heme B porphyrin ring with a hydroxyethyl farnesyl side group. This chain is Protoheme IX farnesyltransferase, found in Microcystis aeruginosa (strain NIES-843 / IAM M-2473).